Consider the following 387-residue polypeptide: Putative transposase y4pF/y4sB (387 aa).

It belongs to the transposase 20 family.

The protein is Putative transposase y4pF/y4sB of Sinorhizobium fredii (strain NBRC 101917 / NGR234).